The chain runs to 255 residues: Aprataxin and PNK-like factor (255 aa).

The span at 1-11 (MSATDASTADS) shows a compositional bias: low complexity. Disordered regions lie at residues 1-117 (MSAT…VSSS), 131-168 (RRNP…FGNA), and 195-255 (RLRQ…DDYD). 3 stretches are compositionally biased toward basic and acidic residues: residues 12–22 (GAKRKSSEDIT), 40–64 (KSEE…KAEP), and 137–150 (RSAE…DYRR). 2 PBZ-type zinc fingers span residues 121–142 (TSCR…AEAH) and 161–182 (PACP…DYSH). Residues 207-218 (DDSGTDEEDEPF) are compositionally biased toward acidic residues. Positions 221 to 230 (DNDRDADYRP) are enriched in basic and acidic residues. Acidic residues predominate over residues 234–244 (INEDEDDELEF).

This sequence belongs to the APLF family.

Its function is as follows. Displays apurinic-apyrimidinic (AP) endonuclease and 3'-5' exonuclease activities in vitro. This chain is Aprataxin and PNK-like factor, found in Drosophila melanogaster (Fruit fly).